A 145-amino-acid polypeptide reads, in one-letter code: Cystatin-F (145 aa).

The first 19 residues, 1–19 (MRAAGTLLAFCCLVLSTTG), serve as a signal peptide directing secretion. N-linked (GlcNAc...) asparagine glycosylation is present at Asn62. A Secondary area of contact motif is present at residues 81–85 (QIVKG). A disulfide bridge links Cys99 with Cys110. Residue Asn115 is glycosylated (N-linked (GlcNAc...) asparagine). Cysteines 124 and 144 form a disulfide.

Belongs to the cystatin family. As to quaternary structure, homodimer; disulfide-linked. Primarily expressed in peripheral blood cells and spleen.

The protein localises to the secreted. The protein resides in the cytoplasm. In terms of biological role, inhibits papain and cathepsin L but with affinities lower than other cystatins. May play a role in immune regulation through inhibition of a unique target in the hematopoietic system. The chain is Cystatin-F (CST7) from Homo sapiens (Human).